A 354-amino-acid polypeptide reads, in one-letter code: UDP-3-O-acylglucosamine N-acyltransferase (354 aa).

Catalysis depends on His258, which acts as the Proton acceptor.

This sequence belongs to the transferase hexapeptide repeat family. LpxD subfamily. As to quaternary structure, homotrimer.

The catalysed reaction is a UDP-3-O-[(3R)-3-hydroxyacyl]-alpha-D-glucosamine + a (3R)-hydroxyacyl-[ACP] = a UDP-2-N,3-O-bis[(3R)-3-hydroxyacyl]-alpha-D-glucosamine + holo-[ACP] + H(+). It functions in the pathway bacterial outer membrane biogenesis; LPS lipid A biosynthesis. In terms of biological role, catalyzes the N-acylation of UDP-3-O-acylglucosamine using 3-hydroxyacyl-ACP as the acyl donor. Is involved in the biosynthesis of lipid A, a phosphorylated glycolipid that anchors the lipopolysaccharide to the outer membrane of the cell. The chain is UDP-3-O-acylglucosamine N-acyltransferase from Sinorhizobium fredii (strain NBRC 101917 / NGR234).